The primary structure comprises 885 residues: Leucine--tRNA ligase (885 aa).

The 'HIGH' region signature appears at 46–56; that stretch reads PYPSGALHMGH. A 'KMSKS' region motif is present at residues 638 to 642; that stretch reads KMSKS. An ATP-binding site is contributed by Lys-641.

It belongs to the class-I aminoacyl-tRNA synthetase family.

It localises to the cytoplasm. It catalyses the reaction tRNA(Leu) + L-leucine + ATP = L-leucyl-tRNA(Leu) + AMP + diphosphate. The polypeptide is Leucine--tRNA ligase (Xanthomonas campestris pv. campestris (strain B100)).